The chain runs to 215 residues: MESSRGKPGLNGSGGGAAAFDYSSRRGYYTGAGAALPPLAAGSRAPPVDPCCVVLRVFVLLGTLASAVVMAADRQSTTVQIAAGEELAPPLRVPVTAKWTYSSAFVYFVVANAMVFAFSAAALAAVRRRSAVVPVMVGDLVAMALLFSAVGAAAQFGLLGERGNAHVRWAKVCDVYGPFCERAMAAVVVALIAAFADLVLLMLTILTIHKASSYY.

The Cytoplasmic segment spans residues 1-51; that stretch reads MESSRGKPGLNGSGGGAAAFDYSSRRGYYTGAGAALPPLAAGSRAPPVDPC. Residues 52–72 form a helical membrane-spanning segment; it reads CVVLRVFVLLGTLASAVVMAA. At 73–103 the chain is on the extracellular side; the sequence is DRQSTTVQIAAGEELAPPLRVPVTAKWTYSS. A helical membrane pass occupies residues 104–124; the sequence is AFVYFVVANAMVFAFSAAALA. Residues 125 to 130 are Cytoplasmic-facing; it reads AVRRRS. Residues 131 to 151 form a helical membrane-spanning segment; that stretch reads AVVPVMVGDLVAMALLFSAVG. Topologically, residues 152 to 185 are extracellular; the sequence is AAAQFGLLGERGNAHVRWAKVCDVYGPFCERAMA. Residues 186-206 form a helical membrane-spanning segment; sequence AVVVALIAAFADLVLLMLTIL. Residues 207–215 are Cytoplasmic-facing; it reads TIHKASSYY.

Belongs to the Casparian strip membrane proteins (CASP) family. As to quaternary structure, homodimer and heterodimers.

Its subcellular location is the cell membrane. The chain is CASP-like protein 1E1 from Oryza sativa subsp. japonica (Rice).